We begin with the raw amino-acid sequence, 665 residues long: GRB2-associated-binding protein 2 (665 aa).

The residue at position 2 (Ser2) is a Phosphoserine. One can recognise a PH domain in the interval 8–119; sequence DVVCTGWLRK…WVQSICQICG (112 aa). The tract at residues 131 to 183 is disordered; sequence RNLSSASHGPRSSPAEFSSSQHLLRERKSSAPSHSSQPTLFTFEPPMTSHMQP. A phosphoserine mark is found at Ser135, Ser142, Ser143, Ser149, Ser150, Ser160, Ser165, Ser211, Ser220, and Ser261. Positions 160–170 are enriched in polar residues; sequence SAPSHSSQPTL. Thr262 is modified (phosphothreonine). Tyr263 bears the Phosphotyrosine mark. Thr275 is subject to Phosphothreonine. Phosphoserine is present on residues Ser278 and Ser282. At Thr284 the chain carries Phosphothreonine. Tyr290 bears the Phosphotyrosine mark. Thr328 is subject to Phosphothreonine. 2 disordered regions span residues 340–442 and 491–517; these read TSGD…ENYV and PSRG…PTPL. The short motif at 348-355 is the SH3-binding element; that stretch reads PPPRPPKP. Ser365 carries the post-translational modification Phosphoserine. 2 positions are modified to phosphothreonine: Thr382 and Thr388. Residue Ser402 is modified to Phosphoserine. Thr405 carries the post-translational modification Phosphothreonine. Low complexity predominate over residues 412-423; it reads GSGESASWSAES. Residues Ser420 and Ser423 each carry the phosphoserine modification. The residue at position 441 (Tyr441) is a Phosphotyrosine. Residues 499–508 carry the SH3-binding motif; sequence PPPVNRNLKP. Ser532 bears the Phosphoserine mark. 2 stretches are compositionally biased toward polar residues: residues 548-566 and 578-600; these read SSSQ…STDS and NPVS…STGS. Residues 548 to 631 form a disordered region; it reads SSSQYCRPIS…SSVTSDEKVD (84 aa). A Phosphoserine modification is found at Ser612. Tyr632 carries the phosphotyrosine modification. Positions 646–659 are enriched in polar residues; that stretch reads TMQEWTDVRQSSEP. The interval 646 to 665 is disordered; that stretch reads TMQEWTDVRQSSEPSKGAKL.

Belongs to the GAB family. As to quaternary structure, part of a complex composed of EEIG1, TNFRSF11A/RANK, PLCG2, GAB2, TEC and BTK; complex formation increases in the presence of TNFSF11/RANKL. Interacts with HCK. Interacts with SHC1; may mediate interaction with receptors. Interacts with SYK. Interacts with PI-3 kinase. Interacts with GRB2 (via SH3 2 domain). Interacts (phosphorylated) with PTPN11. Interacts with TNFRSF11A (via cytoplasmic domain). Interacts (phosphorylated) with 14-3-3 family proteins SFN, YWHAB, YWHAE, YWHAG, YWHAH, YWHAQ and YWHAZ; prevents interaction with GRB2 and attenuates GAB2 signaling. Phosphorylated upon EGF stimulation. Phosphorylated on tyrosine residues by HCK upon IL6 signaling. Phosphorylated on tyrosine residue(s) by the thrombopoietin receptor (TPOR), stem cell factor receptor (SCFR), and T-cell and B-cell antigen receptors, gp130, IL-2R and IL-3R. Phosphorylated upon stimulation of TNFRSF11A/RANK by TNFSF11/RANKL. Post-translationally, dephosphorylated by PTPN11.

It is found in the cytoplasm. It localises to the cell membrane. Its subcellular location is the membrane raft. Functionally, adapter protein which acts downstream of several membrane receptors including cytokine, antigen, hormone, cell matrix and growth factor receptors to regulate multiple signaling pathways. Regulates osteoclast differentiation mediating the TNFRSF11A/RANK signaling. In allergic response, it plays a role in mast cells activation and degranulation through PI-3-kinase regulation. Also involved in the regulation of cell proliferation and hematopoiesis. The protein is GRB2-associated-binding protein 2 (Gab2) of Rattus norvegicus (Rat).